The sequence spans 111 residues: UPF0145 protein BMA10229_A0446 (111 aa).

It belongs to the UPF0145 family.

This is UPF0145 protein BMA10229_A0446 from Burkholderia mallei (strain NCTC 10229).